A 218-amino-acid chain; its full sequence is Small ribosomal subunit protein uS3 (218 aa).

Positions Ile38 to Lys106 constitute a KH type-2 domain.

The protein belongs to the universal ribosomal protein uS3 family. Part of the 30S ribosomal subunit. Forms a tight complex with proteins S10 and S14.

Functionally, binds the lower part of the 30S subunit head. Binds mRNA in the 70S ribosome, positioning it for translation. The chain is Small ribosomal subunit protein uS3 from Bacillus licheniformis (strain ATCC 14580 / DSM 13 / JCM 2505 / CCUG 7422 / NBRC 12200 / NCIMB 9375 / NCTC 10341 / NRRL NRS-1264 / Gibson 46).